A 504-amino-acid chain; its full sequence is Glutamate--tRNA ligase (504 aa).

A 'HIGH' region motif is present at residues 25 to 35 (PSPTGNPHVGL). Residues cysteine 122, cysteine 124, cysteine 149, and aspartate 151 each coordinate Zn(2+). The 'KMSKS' region signature appears at 270–274 (KLSKR). Lysine 273 contacts ATP.

This sequence belongs to the class-I aminoacyl-tRNA synthetase family. Glutamate--tRNA ligase type 1 subfamily. As to quaternary structure, monomer. It depends on Zn(2+) as a cofactor.

The protein resides in the cytoplasm. It catalyses the reaction tRNA(Glu) + L-glutamate + ATP = L-glutamyl-tRNA(Glu) + AMP + diphosphate. Catalyzes the attachment of glutamate to tRNA(Glu) in a two-step reaction: glutamate is first activated by ATP to form Glu-AMP and then transferred to the acceptor end of tRNA(Glu). This is Glutamate--tRNA ligase from Streptomyces griseus subsp. griseus (strain JCM 4626 / CBS 651.72 / NBRC 13350 / KCC S-0626 / ISP 5235).